A 117-amino-acid polypeptide reads, in one-letter code: UPF0295 protein Bsph_0336 (117 aa).

Transmembrane regions (helical) follow at residues 13–33 (SFALALIFIGFIVMYGGIFFK) and 37–57 (ILVLIFMTLGVLCIIGSTVVY).

It belongs to the UPF0295 family.

It localises to the cell membrane. This Lysinibacillus sphaericus (strain C3-41) protein is UPF0295 protein Bsph_0336.